The chain runs to 585 residues: Protein FAM151A (585 aa).

The chain crosses the membrane as a helical span at residues 14 to 34; it reads WVFAGITCVSVVVIAAIVLAI.

This sequence belongs to the menorin family.

It localises to the membrane. The sequence is that of Protein FAM151A (FAM151A) from Homo sapiens (Human).